A 186-amino-acid chain; its full sequence is NADH-quinone oxidoreductase subunit I (186 aa).

2 4Fe-4S ferredoxin-type domains span residues 70-100 (LTTRADGKVQCVSCNMCATVCPAYCIEIQSA) and 113-142 (DRFEIDYSRCIFCGFCVEACPEDAIRMSKD). Positions 80, 83, 86, 90, 122, 125, 128, and 132 each coordinate [4Fe-4S] cluster.

It belongs to the complex I 23 kDa subunit family. NDH-1 is composed of 14 different subunits. Subunits NuoA, H, J, K, L, M, N constitute the membrane sector of the complex. Requires [4Fe-4S] cluster as cofactor.

Its subcellular location is the cell inner membrane. It carries out the reaction a quinone + NADH + 5 H(+)(in) = a quinol + NAD(+) + 4 H(+)(out). In terms of biological role, NDH-1 shuttles electrons from NADH, via FMN and iron-sulfur (Fe-S) centers, to quinones in the respiratory chain. The immediate electron acceptor for the enzyme in this species is believed to be ubiquinone. Couples the redox reaction to proton translocation (for every two electrons transferred, four hydrogen ions are translocated across the cytoplasmic membrane), and thus conserves the redox energy in a proton gradient. The polypeptide is NADH-quinone oxidoreductase subunit I (Pelobacter propionicus (strain DSM 2379 / NBRC 103807 / OttBd1)).